The primary structure comprises 460 residues: Cysteine--tRNA ligase (460 aa).

Zn(2+) is bound at residue C29. A 'HIGH' region motif is present at residues 31–41; it reads ATPQSSPHIGH. 3 residues coordinate Zn(2+): C212, H237, and E241. A 'KMSKS' region motif is present at residues 268 to 272; that stretch reads KMSKS. K271 is a binding site for ATP.

This sequence belongs to the class-I aminoacyl-tRNA synthetase family. Monomer. It depends on Zn(2+) as a cofactor.

It is found in the cytoplasm. It catalyses the reaction tRNA(Cys) + L-cysteine + ATP = L-cysteinyl-tRNA(Cys) + AMP + diphosphate. The chain is Cysteine--tRNA ligase from Corynebacterium glutamicum (strain ATCC 13032 / DSM 20300 / JCM 1318 / BCRC 11384 / CCUG 27702 / LMG 3730 / NBRC 12168 / NCIMB 10025 / NRRL B-2784 / 534).